Reading from the N-terminus, the 603-residue chain is Pentatricopeptide repeat-containing protein At2g02980, chloroplastic (603 aa).

The transit peptide at 1 to 38 (MAISSASLISSFSHAETFTKHSKIDTVNTQNPILLISK) directs the protein to the chloroplast. PPR repeat units lie at residues 93–127 (DIVI…GILP), 128–162 (DNYT…GLDD), 163–193 (NVYV…IVEP), 194–228 (CVVC…YLKP), 229–263 (NEIT…SFCK), 264–294 (YVKV…MRYK), 295–329 (DTQA…NVQP), 330–365 (DEIT…GIVP), 366–400 (SIKH…PTPM), and 432–466 (HGGD…KAVK). Residues 401–476 (LWRILLAACS…VPGCSSIEVN (76 aa)) form a type E motif region. The interval 477-507 (NVVHEFFSGDGVKSATTKLHRALDEMVKELK) is type E(+) motif. The type DYW motif stretch occupies residues 508 to 603 (LSGYVPDTSM…DGKCSCGDFW (96 aa)).

This sequence belongs to the PPR family. PCMP-H subfamily.

It is found in the plastid. It localises to the chloroplast. Functionally, involved in RNA editing event in chloroplasts. Required for the editing of a single site in ndhD transcript, which is a plastid-encoded subunits of the chloroplast NAD(P)H dehydrogenase (NDH) complex. Not essential for the activity of the NDH complex of the photosynthetic electron transport chain. This Arabidopsis thaliana (Mouse-ear cress) protein is Pentatricopeptide repeat-containing protein At2g02980, chloroplastic (PCMP-H26).